A 481-amino-acid chain; its full sequence is Alpha-L-arabinofuranosidase 43 (481 aa).

A signal peptide spans 1-19 (MRFSVFTAAIAAAFSACCA). N-linked (GlcNAc...) asparagine glycans are attached at residues Asn158, Asn176, and Asn365.

Belongs to the glycosyl hydrolase 43 family.

It is found in the secreted. The catalysed reaction is Hydrolysis of terminal non-reducing alpha-L-arabinofuranoside residues in alpha-L-arabinosides.. Its activity is regulated as follows. Activity is significantly inhibited by SDS and partially inhibited by Ag(+), Fe(3+) and beta-mercaptoethanol. Alpha-L-arabinofuranosidase specific for the cleavage of alpha-1,3-linkage. Shows high activity against 4-nitrophenyl alpha-L-arabinofuranoside, debranched arabinan, and sugar beet arabinan. The polypeptide is Alpha-L-arabinofuranosidase 43 (Humicola insolens (Soft-rot fungus)).